Consider the following 314-residue polypeptide: Hydroxyethylthiazole kinase (314 aa).

Positions 1–13 (MSNSASSFADVSS) are enriched in low complexity. Residues 1-24 (MSNSASSFADVSSGCTAGTPVPAD) are disordered. Substrate is bound at residue Met-70. ATP is bound by residues Arg-145 and Ser-217. Gly-244 is a binding site for substrate.

Belongs to the Thz kinase family. Requires Mg(2+) as cofactor.

It catalyses the reaction 5-(2-hydroxyethyl)-4-methylthiazole + ATP = 4-methyl-5-(2-phosphooxyethyl)-thiazole + ADP + H(+). The protein operates within cofactor biosynthesis; thiamine diphosphate biosynthesis; 4-methyl-5-(2-phosphoethyl)-thiazole from 5-(2-hydroxyethyl)-4-methylthiazole: step 1/1. Catalyzes the phosphorylation of the hydroxyl group of 4-methyl-5-beta-hydroxyethylthiazole (THZ). In Bifidobacterium longum subsp. infantis (strain ATCC 15697 / DSM 20088 / JCM 1222 / NCTC 11817 / S12), this protein is Hydroxyethylthiazole kinase.